Consider the following 420-residue polypeptide: Torsin-4A (420 aa).

A helical membrane pass occupies residues 130–150 (CLLLFIAIVCFQIFNAIENLD). 202–209 (GPSGVGKS) serves as a coordination point for ATP.

The protein belongs to the ClpA/ClpB family. Torsin subfamily.

It localises to the membrane. This Xenopus tropicalis (Western clawed frog) protein is Torsin-4A (tor4a).